The primary structure comprises 154 residues: Ribonuclease H (154 aa).

Positions 1-142 (MLKKIDLYTD…CDELAREAAS (142 aa)) constitute an RNase H type-1 domain. Positions 10, 48, 70, and 134 each coordinate Mg(2+). The segment at 133 to 154 (CDELAREAASGKQLAEDTGYQP) is disordered.

It belongs to the RNase H family. As to quaternary structure, monomer. Requires Mg(2+) as cofactor.

The protein localises to the cytoplasm. The catalysed reaction is Endonucleolytic cleavage to 5'-phosphomonoester.. Its function is as follows. Endonuclease that specifically degrades the RNA of RNA-DNA hybrids. The sequence is that of Ribonuclease H from Aeromonas hydrophila subsp. hydrophila (strain ATCC 7966 / DSM 30187 / BCRC 13018 / CCUG 14551 / JCM 1027 / KCTC 2358 / NCIMB 9240 / NCTC 8049).